The sequence spans 271 residues: Undecaprenyl-diphosphatase (271 aa).

8 helical membrane-spanning segments follow: residues 2–22 (LLILKAIILAIVEGLTEFVPV), 42–62 (ANLFNVVIQLGAILAVVVVYW), 80–100 (LRFWINIVVACIPAVIFGFSL), 108–128 (LFNPITVAIGLVIGGILMIIV), 149–168 (SIFVGMFQCLALWPGMSRSA), 175–195 (WIAGLSPVVAAEFSFFLAIPV), 214–234 (IEFIALIVGFVGAFLVSLVVI), and 248–268 (IFAIYRIFIGAILLILAIFKI).

The protein belongs to the UppP family.

The protein localises to the cell membrane. The enzyme catalyses di-trans,octa-cis-undecaprenyl diphosphate + H2O = di-trans,octa-cis-undecaprenyl phosphate + phosphate + H(+). In terms of biological role, catalyzes the dephosphorylation of undecaprenyl diphosphate (UPP). Confers resistance to bacitracin. This is Undecaprenyl-diphosphatase from Clostridium tetani (strain Massachusetts / E88).